A 151-amino-acid chain; its full sequence is Macrodomain Ter protein (151 aa).

The protein belongs to the MatP family. Homodimer.

It localises to the cytoplasm. Required for spatial organization of the terminus region of the chromosome (Ter macrodomain) during the cell cycle. Prevents early segregation of duplicated Ter macrodomains during cell division. Binds specifically to matS, which is a 13 bp signature motif repeated within the Ter macrodomain. This Yersinia enterocolitica serotype O:8 / biotype 1B (strain NCTC 13174 / 8081) protein is Macrodomain Ter protein.